A 341-amino-acid polypeptide reads, in one-letter code: Anthranilate phosphoribosyltransferase (341 aa).

Residues Gly80, 83–84, Thr88, 90–93, 108–116, and Ser120 contribute to the 5-phospho-alpha-D-ribose 1-diphosphate site; these read GD, NIST, and KHGNRAMSS. An anthranilate-binding site is contributed by Gly80. Ser92 contributes to the Mg(2+) binding site. Residue Asn111 participates in anthranilate binding. Arg166 is a binding site for anthranilate. The Mg(2+) site is built by Asp225 and Glu226.

This sequence belongs to the anthranilate phosphoribosyltransferase family. Homodimer. Mg(2+) is required as a cofactor.

It carries out the reaction N-(5-phospho-beta-D-ribosyl)anthranilate + diphosphate = 5-phospho-alpha-D-ribose 1-diphosphate + anthranilate. It functions in the pathway amino-acid biosynthesis; L-tryptophan biosynthesis; L-tryptophan from chorismate: step 2/5. Catalyzes the transfer of the phosphoribosyl group of 5-phosphorylribose-1-pyrophosphate (PRPP) to anthranilate to yield N-(5'-phosphoribosyl)-anthranilate (PRA). The sequence is that of Anthranilate phosphoribosyltransferase from Roseiflexus sp. (strain RS-1).